Here is a 1809-residue protein sequence, read N- to C-terminus: Proprotein convertase subtilisin/kexin type 5 (1809 aa).

The signal sequence occupies residues 1–34 (MDWGWGSRCCRPGRRDLLCVLALLAGCLLPVCRT). The propeptide occupies 35–116 (RVYTNHWAVK…QQVVKKRTKR (82 aa)). Topologically, residues 117 to 1700 (DYDLSRAQST…DTVFHEHTKT (1584 aa)) are extracellular. Positions 136-455 (MWYMHCSDNT…FGLMDAEAMV (320 aa)) constitute a Peptidase S8 domain. Catalysis depends on charge relay system residues D173 and H214. N-linked (GlcNAc...) asparagine glycans are attached at residues N227 and N383. S388 (charge relay system) is an active-site residue. Positions 463 to 603 (TVPQQHVCVE…SLVLYGTSVQ (141 aa)) constitute a P/Homo B domain. The Cell attachment site signature appears at 521–523 (RGD). 21 FU repeats span residues 632–682 (EDYA…GHFH), 685–732 (KKRC…GSYQ), 736–779 (KNIC…GQFF), 781–826 (GHDC…SYYL), 834–881 (YKSC…GEYI), 884–929 (QGHC…WKFE), 931–964 (KKQC…QDSE), 965–1010 (YGEC…KTFG), 1012–1054 (KWEC…GFYG), 1058–1099 (LGEC…PTWP), 1137–1179 (TRQY…GTWL), 1183–1230 (SSSC…GFYA), 1232–1276 (DGVC…KHVA), 1278–1321 (EGVC…NFYP), 1323–1369 (MRQC…GTYK), 1373–1418 (NDEC…IEYW), 1422–1467 (SHRC…GYHT), 1471–1516 (SHQC…GYYG), 1520–1567 (SGRC…HYYA), 1571–1616 (AQTC…GEYR), and 1622–1669 (NFNC…SHPH). Positions 638-1685 (CDPECSEVGC…DCQSSTDECI (1048 aa)) are CRM (Cys-rich motif). N667 carries an N-linked (GlcNAc...) asparagine glycan. N754, N804, and N854 each carry an N-linked (GlcNAc...) asparagine glycan. N-linked (GlcNAc...) asparagine glycosylation is found at N1642 and N1664. The helical transmembrane segment at 1701–1721 (ALLVTSGAMLLLLLGAAVVVW) threads the bilayer. At 1722 to 1809 (RKSRSQPVAK…EYDDESYSYQ (88 aa)) the chain is on the cytoplasmic side. 2 AC regions span residues 1757–1776 (VIEY…IVYM) and 1788–1809 (YGLL…YSYQ).

It belongs to the peptidase S8 family. Expressed in the intestine, brain, adrenal gland, anterior pituitary, thyroid, ovaries, testis and lung. Highest levels are found in the gut, duodenum, jejunum and ileum. Expression is higher in female than in male reproductive organs.

The protein resides in the secreted. Its subcellular location is the endomembrane system. Serine endoprotease that processes various proproteins by cleavage at paired basic amino acids, recognizing the RXXX[KR]R consensus motif. Likely functions in the constitutive and regulated secretory pathways. Plays an essential role in pregnancy establishment by proteolytic activation of a number of important factors such as BMP2, CALD1 and alpha-integrins. May be responsible for the maturation of gastrointestinal peptides. May be involved in the cellular proliferation of adrenal cortex via the activation of growth factors. The protein is Proprotein convertase subtilisin/kexin type 5 (Pcsk5) of Rattus norvegicus (Rat).